The sequence spans 79 residues: ATP synthase subunit beta (79 aa).

It belongs to the ATPase alpha/beta chains family. As to quaternary structure, F-type ATPases have 2 components, CF(1) - the catalytic core - and CF(0) - the membrane proton channel. CF(1) has five subunits: alpha(3), beta(3), gamma(1), delta(1), epsilon(1). CF(0) has three main subunits: a(1), b(2) and c(9-12). The alpha and beta chains form an alternating ring which encloses part of the gamma chain. CF(1) is attached to CF(0) by a central stalk formed by the gamma and epsilon chains, while a peripheral stalk is formed by the delta and b chains.

It is found in the cell membrane. It carries out the reaction ATP + H2O + 4 H(+)(in) = ADP + phosphate + 5 H(+)(out). Its function is as follows. Produces ATP from ADP in the presence of a proton gradient across the membrane. The catalytic sites are hosted primarily by the beta subunits. The protein is ATP synthase subunit beta (atpD) of Streptococcus downei (Streptococcus sobrinus).